The sequence spans 103 residues: Small ribosomal subunit protein uS10 (103 aa).

This sequence belongs to the universal ribosomal protein uS10 family. In terms of assembly, part of the 30S ribosomal subunit.

Functionally, involved in the binding of tRNA to the ribosomes. The sequence is that of Small ribosomal subunit protein uS10 from Neorickettsia sennetsu (strain ATCC VR-367 / Miyayama) (Ehrlichia sennetsu).